A 101-amino-acid polypeptide reads, in one-letter code: Small ribosomal subunit protein uS14A (101 aa).

The disordered stretch occupies residues 47-66; it reads ALASLPRDSNPNRVTNRCAL.

This sequence belongs to the universal ribosomal protein uS14 family. As to quaternary structure, part of the 30S ribosomal subunit. Contacts proteins S3 and S10.

Functionally, binds 16S rRNA, required for the assembly of 30S particles and may also be responsible for determining the conformation of the 16S rRNA at the A site. The protein is Small ribosomal subunit protein uS14A of Myxococcus xanthus (strain DK1622).